A 238-amino-acid chain; its full sequence is 15,16-dihydrobiliverdin:ferredoxin oxidoreductase (238 aa).

The protein belongs to the HY2 family.

It catalyses the reaction 15,16-dihydrobiliverdin + oxidized 2[4Fe-4S]-[ferredoxin] = biliverdin IXalpha + reduced 2[4Fe-4S]-[ferredoxin] + 2 H(+). Its function is as follows. Catalyzes the two-electron reduction of biliverdin IX-alpha at the C15 methine bridge. The protein is 15,16-dihydrobiliverdin:ferredoxin oxidoreductase of Prochlorococcus marinus (strain NATL2A).